We begin with the raw amino-acid sequence, 90 residues long: Acylphosphatase (90 aa).

The Acylphosphatase-like domain maps to Thr4–Arg90. Catalysis depends on residues Arg19 and Asn37.

The protein belongs to the acylphosphatase family.

The catalysed reaction is an acyl phosphate + H2O = a carboxylate + phosphate + H(+). The chain is Acylphosphatase (acyP) from Thermoplasma volcanium (strain ATCC 51530 / DSM 4299 / JCM 9571 / NBRC 15438 / GSS1).